The following is a 344-amino-acid chain: L-rhamnose-proton symporter (344 aa).

A run of 10 helical transmembrane segments spans residues 4–24 (AITM…CFYA), 38–58 (WSVG…ALLL), 68–88 (FSLS…IGNI), 101–121 (MGIG…TPII), 137–157 (TLLG…AGQL), 175–195 (LVLA…MNAA), 214–234 (LPSY…FCFI), 259–279 (VLLS…YAWG), 290–310 (ISWM…GLVL), and 323–343 (VLSL…IGMA).

It belongs to the L-rhamnose transporter (TC 2.A.7.6) family.

The protein localises to the cell inner membrane. The enzyme catalyses L-rhamnopyranose(in) + H(+)(in) = L-rhamnopyranose(out) + H(+)(out). In terms of biological role, uptake of L-rhamnose across the cytoplasmic membrane with the concomitant transport of protons into the cell (symport system). This chain is L-rhamnose-proton symporter, found in Escherichia coli O1:K1 / APEC.